Here is a 313-residue protein sequence, read N- to C-terminus: Putative S-adenosyl-L-methionine-dependent methyltransferase MAV_5149 (313 aa).

S-adenosyl-L-methionine contacts are provided by residues Asp-135 and 164-165 (DL).

This sequence belongs to the UPF0677 family.

Its function is as follows. Exhibits S-adenosyl-L-methionine-dependent methyltransferase activity. This is Putative S-adenosyl-L-methionine-dependent methyltransferase MAV_5149 from Mycobacterium avium (strain 104).